Here is a 219-residue protein sequence, read N- to C-terminus: Cytidylate kinase (219 aa).

Position 10–18 (10–18 (GPAAAGKST)) interacts with ATP.

The protein belongs to the cytidylate kinase family. Type 1 subfamily.

The protein resides in the cytoplasm. It catalyses the reaction CMP + ATP = CDP + ADP. The catalysed reaction is dCMP + ATP = dCDP + ADP. This chain is Cytidylate kinase, found in Staphylococcus aureus (strain MRSA252).